The chain runs to 638 residues: Probable lysine-specific demethylase 4F (638 aa).

Residues 15–57 (IMTFYPTMEEFADFNTYVAYMESQGAHRAGLAKVIPPKEWKAR) enclose the JmjN domain. Y133 is a 2-oxoglutarate binding site. The region spanning 143 to 309 (EESTKQWNLG…YGKVASQCSC (167 aa)) is the JmjC domain. Fe cation contacts are provided by H189 and E191. 2-oxoglutarate is bound by residues N199 and K207. 2 residues coordinate Zn(2+): C235 and H241. K242 is a binding site for 2-oxoglutarate. H277 contacts Fe cation. 2 residues coordinate Zn(2+): C307 and C309. The tract at residues 426–474 (PCRGCGRGRGRGRGRGRRPRELGTEETTVQSAAKRRLSVGTGSRAPGRK) is disordered. The span at 431–443 (GRGRGRGRGRGRR) shows a compositional bias: basic residues.

This sequence belongs to the JHDM3 histone demethylase family. Fe(2+) serves as cofactor.

The protein localises to the nucleus. It catalyses the reaction N(6),N(6),N(6)-trimethyl-L-lysyl(9)-[histone H3] + 2 2-oxoglutarate + 2 O2 = N(6)-methyl-L-lysyl(9)-[histone H3] + 2 formaldehyde + 2 succinate + 2 CO2. Probable histone demethylase that specifically demethylates 'Lys-9' of histone H3, thereby playing a central role in histone code. The chain is Probable lysine-specific demethylase 4F from Homo sapiens (Human).